Consider the following 352-residue polypeptide: Protein NDRG4 (352 aa).

Ser298, Ser317, and Ser323 each carry phosphoserine. Low complexity predominate over residues 314-323 (RTASLTSASS). A disordered region spans residues 314–352 (RTASLTSASSVDGSRPQACTHSESSEGLGQVNHTMEVSC). Residues 330–352 (QACTHSESSEGLGQVNHTMEVSC) show a composition bias toward polar residues.

Belongs to the NDRG family. Phosphorylated in an aortic smooth muscle cell line, following PDGF treatment. As to expression, expressed predominantly in brain and heart (at protein level). In the brain, detected in astrocytes. Isoform 1 and isoform 2 are only expressed in brain. Isoform 3 is expressed in both heart and brain. Up-regulated in glioblastoma multiforme cells.

It is found in the cytoplasm. The protein resides in the cytosol. In terms of biological role, contributes to the maintenance of intracerebral BDNF levels within the normal range, which is necessary for the preservation of spatial learning and the resistance to neuronal cell death caused by ischemic stress. May enhance growth factor-induced ERK1 and ERK2 phosphorylation, including that induced by PDGF and FGF. May attenuate NGF-promoted ELK1 phosphorylation in a microtubule-dependent manner. The polypeptide is Protein NDRG4 (NDRG4) (Homo sapiens (Human)).